The chain runs to 386 residues: Protein salvador homolog 1 (386 aa).

2 positions are modified to phosphoserine: Ser95 and Ser137. WW domains follow at residues 200-233 (LPLP…HPLE) and 235-268 (EGLP…HPCA). Thr211 bears the Phosphothreonine mark. The SARAH domain occupies 322–369 (ILKWELFQLADLDTYQGMLKLLFMKELEQIVKLYEAYRQALLTELENR). A coiled-coil region spans residues 345–374 (MKELEQIVKLYEAYRQALLTELENRKQRQQ).

In terms of assembly, homodimer. Stabilized through interaction with STK3/MST2 or STK4/MST1. Interacts (via SARAH domain) with isoform 1 of NEK2. Interacts with ESR1 only in the presence of STK3/MST2. Interacts with WTIP and AJUBA. Post-translationally, phosphorylated by STK3/MST2 and STK4/MST1. Phosphorylation is not required for SAV1 stability and may increase the number of protein binding sites on the scaffold molecule. As to expression, ubiquitously expressed in adult tissues with the highest level found in testis.

It is found in the nucleus. The protein resides in the cytoplasm. Its function is as follows. Regulator of STK3/MST2 and STK4/MST1 in the Hippo signaling pathway which plays a pivotal role in organ size control and tumor suppression by restricting proliferation and promoting apoptosis. The core of this pathway is composed of a kinase cascade wherein STK3/MST2 and STK4/MST1, in complex with its regulatory protein SAV1, phosphorylates and activates LATS1/2 in complex with its regulatory protein MOB1, which in turn phosphorylates and inactivates YAP1 oncoprotein and WWTR1/TAZ. Phosphorylation of YAP1 by LATS1/2 inhibits its translocation into the nucleus to regulate cellular genes important for cell proliferation, cell death, and cell migration. SAV1 is required for STK3/MST2 and STK4/MST1 activation and promotes cell-cycle exit and terminal differentiation in developing epithelial tissues. Plays a role in centrosome disjunction by regulating the localization of NEK2 to centrosomes, and its ability to phosphorylate CROCC and CEP250. In conjunction with STK3/MST2, activates the transcriptional activity of ESR1 through the modulation of its phosphorylation. The chain is Protein salvador homolog 1 (Sav1) from Mus musculus (Mouse).